Here is a 174-residue protein sequence, read N- to C-terminus: Small ribosomal subunit protein uS4 (174 aa).

The region spanning 105–169 (RRLQTVAYRK…SPLADDLHPE (65 aa)) is the S4 RNA-binding domain.

It belongs to the universal ribosomal protein uS4 family. In terms of assembly, part of the 30S ribosomal subunit. Contacts protein S5. The interaction surface between S4 and S5 is involved in control of translational fidelity.

One of the primary rRNA binding proteins, it binds directly to 16S rRNA where it nucleates assembly of the body of the 30S subunit. Its function is as follows. With S5 and S12 plays an important role in translational accuracy. This Natronomonas pharaonis (strain ATCC 35678 / DSM 2160 / CIP 103997 / JCM 8858 / NBRC 14720 / NCIMB 2260 / Gabara) (Halobacterium pharaonis) protein is Small ribosomal subunit protein uS4.